The chain runs to 54 residues: Light-harvesting protein B-800/850 alpha chain (54 aa).

The Cytoplasmic portion of the chain corresponds to 1 to 14 (MTNGKIWLVVKPTV). Residues 15 to 35 (GVPLFLSAAVIASVVIHAAVL) traverse the membrane as a helical segment. An a bacteriochlorophyll-binding site is contributed by H31. At 36–54 (TTTTWLPAYYQGSAAVAAE) the chain is on the periplasmic side.

Belongs to the antenna complex alpha subunit family. In terms of assembly, the core complex is formed by different alpha and beta chains, binding bacteriochlorophyll molecules, and arranged most probably in tetrameric structures disposed around the reaction center. The non-pigmented gamma chains may constitute additional components.

It localises to the cell inner membrane. In terms of biological role, antenna complexes are light-harvesting systems, which transfer the excitation energy to the reaction centers. In Cereibacter sphaeroides (Rhodobacter sphaeroides), this protein is Light-harvesting protein B-800/850 alpha chain (pucA).